Reading from the N-terminus, the 513-residue chain is Calcium-dependent protein kinase 24 (513 aa).

Residues 1 to 33 (MQPDPSGSGGDGNANAKAKLAPPPVTAAGGRPV) are disordered. The Protein kinase domain occupies 47-305 (YRIGKKLGQG…AHEVLCHPWI (259 aa)). Residues 53-61 (LGQGQFGTT) and K76 contribute to the ATP site. The active-site Proton acceptor is D171. Positions 311-341 (APDKPIDSAVLSRLKHFSAMNKLKKMALRVI) are autoinhibitory domain. 4 EF-hand domains span residues 348–383 (EEIG…VGSE), 384–419 (LTEH…MNKL), 420–455 (EREE…FGLD), and 458–489 (HLED…GNAG). Ca(2+)-binding residues include D361, D363, S365, T367, E372, D397, D399, S401, T403, E408, D433, D435, S437, E444, D467, N469, D471, Q473, and E478.

The protein belongs to the protein kinase superfamily. Ser/Thr protein kinase family. CDPK subfamily. As to expression, expressed in roots.

The protein resides in the cytoplasm. It carries out the reaction L-seryl-[protein] + ATP = O-phospho-L-seryl-[protein] + ADP + H(+). The catalysed reaction is L-threonyl-[protein] + ATP = O-phospho-L-threonyl-[protein] + ADP + H(+). Activated by calcium. Autophosphorylation may play an important role in the regulation of the kinase activity. Functionally, may play a role in signal transduction pathways that involve calcium as a second messenger. Possesses calcium-dependent protein kinase activity in vitro. This Oryza sativa subsp. japonica (Rice) protein is Calcium-dependent protein kinase 24.